The sequence spans 63 residues: Actiflagelin (63 aa).

5 cysteine pairs are disulfide-bonded: Cys3/Cys24, Cys6/Cys11, Cys17/Cys39, Cys43/Cys55, and Cys56/Cys61. A Proline amide modification is found at Pro63.

Post-translationally, contains 5 disulfide bonds. As to expression, expressed by the venom gland.

Its subcellular location is the secreted. Its function is as follows. Unknown. In vitro, this toxin activates sperm motility when tested on OF1 male mice. This is Actiflagelin from Walterinnesia aegyptia (Desert black snake).